An 801-amino-acid chain; its full sequence is Probable phosphoketolase (801 aa).

It belongs to the XFP family. It depends on thiamine diphosphate as a cofactor.

The sequence is that of Probable phosphoketolase from Bradyrhizobium diazoefficiens (strain JCM 10833 / BCRC 13528 / IAM 13628 / NBRC 14792 / USDA 110).